Consider the following 832-residue polypeptide: uncharacterized protein (832 aa).

This is an uncharacterized protein from Rickettsia bellii (strain RML369-C).